We begin with the raw amino-acid sequence, 500 residues long: Glycerol kinase (500 aa).

An ADP-binding site is contributed by Thr-12. Residues Thr-12, Thr-13, and Ser-14 each contribute to the ATP site. Thr-12 is a binding site for sn-glycerol 3-phosphate. Arg-16 contacts ADP. Residues Arg-82, Glu-83, Tyr-135, and Asp-245 each coordinate sn-glycerol 3-phosphate. Residues Arg-82, Glu-83, Tyr-135, Asp-245, and Gln-246 each contribute to the glycerol site. ADP contacts are provided by Thr-267 and Gly-310. ATP-binding residues include Thr-267, Gly-310, Gln-314, and Gly-411. Residues Gly-411 and Asn-415 each contribute to the ADP site.

It belongs to the FGGY kinase family. In terms of assembly, homotetramer and homodimer (in equilibrium).

It carries out the reaction glycerol + ATP = sn-glycerol 3-phosphate + ADP + H(+). It participates in polyol metabolism; glycerol degradation via glycerol kinase pathway; sn-glycerol 3-phosphate from glycerol: step 1/1. Activated by phosphorylation and inhibited by fructose 1,6-bisphosphate (FBP). In terms of biological role, key enzyme in the regulation of glycerol uptake and metabolism. Catalyzes the phosphorylation of glycerol to yield sn-glycerol 3-phosphate. This Clostridium perfringens (strain SM101 / Type A) protein is Glycerol kinase.